Here is a 356-residue protein sequence, read N- to C-terminus: Glucose 1-dehydrogenase (356 aa).

Residues 1 to 26 form a disordered region; that stretch reads MDAIVVSKADRTPRLVDRPRPDPTPG. Basic and acidic residues predominate over residues 8–21; that stretch reads KADRTPRLVDRPRP. Asp-38 contributes to the Zn(2+) binding site. Thr-40 contacts substrate. Residues His-63 and Glu-64 each contribute to the Zn(2+) site. A disordered region spans residues 86 to 107; sequence TVRRPRGDPTPQFDRGQPDMAA. Substrate contacts are provided by Glu-113 and Glu-149. Glu-149 is a Zn(2+) binding site. NADP(+) is bound by residues 180-183, 205-206, 270-272, and 300-302; these read NGSL, RR, LGV, and SVN. Residue Asn-302 participates in substrate binding.

The protein belongs to the zinc-containing alcohol dehydrogenase family. Glucose 1-dehydrogenase subfamily. It depends on Zn(2+) as a cofactor.

The enzyme catalyses D-glucose + NAD(+) = D-glucono-1,5-lactone + NADH + H(+). It carries out the reaction D-glucose + NADP(+) = D-glucono-1,5-lactone + NADPH + H(+). In terms of biological role, catalyzes the NAD(P)(+)-dependent oxidation of D-glucose to D-gluconate via gluconolactone. Can utilize both NAD(+) and NADP(+) as electron acceptor. Is involved in the degradation of glucose through a modified Entner-Doudoroff pathway. The sequence is that of Glucose 1-dehydrogenase from Halobacterium salinarum (strain ATCC 700922 / JCM 11081 / NRC-1) (Halobacterium halobium).